The following is a 476-amino-acid chain: BTB/POZ domain-containing protein KCTD8 (476 aa).

The BTB domain occupies 44-122 (EVVELNVGGQ…LRDKQLALPE (79 aa)). Ser78 bears the Phosphoserine mark. At Arg80 the chain carries Omega-N-methylarginine. Residues 331-412 (SPKQEHEDRK…WMPPPDKRRN (82 aa)) are disordered. Positions 333-349 (KQEHEDRKRDKVTDKGS) are enriched in basic and acidic residues. The span at 350–391 (ESGTSCNELSTSSCDSHSEASTPQDNPANTQQAAAHQPNTLT) shows a compositional bias: polar residues. A Phosphoserine modification is found at Ser413.

Interacts as a tetramer with GABBR1 and GABBR2.

It localises to the presynaptic cell membrane. The protein resides in the postsynaptic cell membrane. Functionally, auxiliary subunit of GABA-B receptors that determine the pharmacology and kinetics of the receptor response. Increases agonist potency and markedly alter the G-protein signaling of the receptors by accelerating onset and promoting desensitization. This is BTB/POZ domain-containing protein KCTD8 (Kctd8) from Mus musculus (Mouse).